A 318-amino-acid chain; its full sequence is NADH-ubiquinone oxidoreductase chain 1 (318 aa).

Transmembrane regions (helical) follow at residues 2–22, 69–89, 102–122, 146–166, 171–191, 231–251, 253–273, and 294–314; these read FMIN…FLTL, FMFT…WVPL, MLFI…SGWA, LAII…STLT, HLWL…STLA, IIMM…NPLL, EAHT…FLWV, and LPLT…LACI.

Belongs to the complex I subunit 1 family. In terms of assembly, core subunit of respiratory chain NADH dehydrogenase (Complex I) which is composed of 45 different subunits.

It localises to the mitochondrion inner membrane. The catalysed reaction is a ubiquinone + NADH + 5 H(+)(in) = a ubiquinol + NAD(+) + 4 H(+)(out). Its function is as follows. Core subunit of the mitochondrial membrane respiratory chain NADH dehydrogenase (Complex I) which catalyzes electron transfer from NADH through the respiratory chain, using ubiquinone as an electron acceptor. Essential for the catalytic activity and assembly of complex I. The polypeptide is NADH-ubiquinone oxidoreductase chain 1 (MT-ND1) (Dugong dugon (Dugong)).